Here is a 536-residue protein sequence, read N- to C-terminus: Formate--tetrahydrofolate ligase (536 aa).

Residue T51 to T58 participates in ATP binding.

Belongs to the formate--tetrahydrofolate ligase family.

The catalysed reaction is (6S)-5,6,7,8-tetrahydrofolate + formate + ATP = (6R)-10-formyltetrahydrofolate + ADP + phosphate. The protein operates within one-carbon metabolism; tetrahydrofolate interconversion. The sequence is that of Formate--tetrahydrofolate ligase from Thermoplasma acidophilum (strain ATCC 25905 / DSM 1728 / JCM 9062 / NBRC 15155 / AMRC-C165).